The following is a 1527-amino-acid chain: Peroxidasin (1527 aa).

An N-terminal signal peptide occupies residues 1–23 (MRFMLLMLQLLGLLLLLAGGVQS). The LRRNT domain maps to 24–53 (VYCPAGCTCLERTVRCIRAKLSAVPKLPQD). LRR repeat units lie at residues 51 to 74 (PQDT…AFSG), 75 to 98 (LAQL…ALNG), 99 to 122 (LTAL…IFQR), 124 to 146 (PRLE…LFDN), 147 to 170 (LPRL…GFNR), and 172 to 196 (NNLK…LWRR). Ig-like C2-type domains lie at 236–322 (PQFL…QPVR), 365–453 (PHFT…ARIE), 458–545 (PEIL…ATIK), and 553–643 (PQLA…ALVT). 4 disulfides stabilise this stretch: Cys257-Cys307, Cys388-Cys437, Cys479-Cys529, and Cys574-Cys627. Residue Asn419 is glycosylated (N-linked (GlcNAc...) asparagine). 5 N-linked (GlcNAc...) asparagine glycosylation sites follow: Asn616, Asn673, Asn682, Asn731, and Asn767. Cysteines 768 and 784 form a disulfide. Asp862 contacts heme b. His863 serves as the catalytic Proton acceptor. Asp864 is a Ca(2+) binding site. 2 disulfides stabilise this stretch: Cys882-Cys892 and Cys886-Cys909. 4 residues coordinate Ca(2+): Thr941, Tyr943, Asp945, and Ser947. Asn962 carries an N-linked (GlcNAc...) asparagine glycan. The cysteines at positions 994 and 1005 are disulfide-linked. The heme b site is built by Glu1015 and His1109. Residues Asn1120 and Asn1213 are each glycosylated (N-linked (GlcNAc...) asparagine). Disulfide bonds link Cys1212–Cys1269 and Cys1310–Cys1336. Residues 1403–1441 (NEERVSGLEELIGSFQKELKKLHKKLRKLEDSCNSADSE) are a coiled coil. The VWFC domain maps to 1463-1524 (SHCVDDKGTT…PPEACCPHCP (62 aa)).

Belongs to the peroxidase family. XPO subfamily. Homotrimer; disulfide-linked. The cofactor is Ca(2+). Heme b serves as cofactor. In terms of tissue distribution, expressed in hemocytes. Also expressed in the fat body and gastric caeca.

It localises to the secreted. The catalysed reaction is (5R)-5-hydroxy-L-lysyl-[collagen] + L-methionyl-[collagen] + H2O2 = [collagen]-(5R)-5-hydroxy-L-lysyl-N-S-L-methionyl-[collagen] + 2 H2O + H(+). It catalyses the reaction bromide + H2O2 = hypobromite + H2O. It carries out the reaction (5R)-5-hydroxy-L-lysyl-[collagen] + L-methionyl-[collagen] + hypobromite = [collagen]-(5R)-5-hydroxy-L-lysyl-N-S-L-methionyl-[collagen] + bromide + H2O + H(+). The enzyme catalyses L-lysyl-[collagen] + L-methionyl-[collagen] + H2O2 = [collagen]-L-lysyl-N-S-L-methionyl-[collagen] + 2 H2O + H(+). The catalysed reaction is L-lysyl-[collagen] + L-methionyl-[collagen] + hypobromite = [collagen]-L-lysyl-N-S-L-methionyl-[collagen] + bromide + H2O + H(+). It catalyses the reaction L-tyrosyl-[protein] + bromide + H2O2 + H(+) = 3-bromo-L-tyrosyl-[protein] + 2 H2O. It carries out the reaction hypobromite + L-tyrosyl-[protein] + H(+) = 3-bromo-L-tyrosyl-[protein] + H2O. In terms of biological role, catalyzes the two-electron oxidation of bromide by hydrogen peroxide and generates hypobromite as a reactive intermediate which mediates the formation of sulfilimine cross-links between methionine and hydroxylysine residues within an uncross-linked collagen IV NC1 hexamer. Plays a role in extracellular matrix consolidation, phagocytosis and defense. In Drosophila melanogaster (Fruit fly), this protein is Peroxidasin.